The sequence spans 107 residues: Nucleoid-associated protein Atu0095 (107 aa).

Residues 81-107 (KGEAQAQEKMADLTAGLPLPPGMKLPF) form a disordered region. Pro residues predominate over residues 98 to 107 (PLPPGMKLPF).

The protein belongs to the YbaB/EbfC family. Homodimer.

The protein resides in the cytoplasm. The protein localises to the nucleoid. Functionally, binds to DNA and alters its conformation. May be involved in regulation of gene expression, nucleoid organization and DNA protection. In Agrobacterium fabrum (strain C58 / ATCC 33970) (Agrobacterium tumefaciens (strain C58)), this protein is Nucleoid-associated protein Atu0095.